A 278-amino-acid chain; its full sequence is tRNA pseudouridine synthase A (278 aa).

Asp-52 (nucleophile) is an active-site residue. Tyr-110 contributes to the substrate binding site. A disordered region spans residues 259-278 (SKRQNGTTKVEQPSSYVHEE). Positions 261–278 (RQNGTTKVEQPSSYVHEE) are enriched in polar residues.

Belongs to the tRNA pseudouridine synthase TruA family. Homodimer.

It catalyses the reaction uridine(38/39/40) in tRNA = pseudouridine(38/39/40) in tRNA. In terms of biological role, formation of pseudouridine at positions 38, 39 and 40 in the anticodon stem and loop of transfer RNAs. This chain is tRNA pseudouridine synthase A, found in Chloroflexus aurantiacus (strain ATCC 29366 / DSM 635 / J-10-fl).